The sequence spans 213 residues: Kynurenine formamidase (213 aa).

Substrate is bound at residue W18. The Zn(2+) site is built by H48, H52, and D54. Residue H58 is the Proton donor/acceptor of the active site. Residues H160 and E172 each coordinate Zn(2+).

Belongs to the Cyclase 1 superfamily. KynB family. Homodimer. Zn(2+) serves as cofactor.

It catalyses the reaction N-formyl-L-kynurenine + H2O = L-kynurenine + formate + H(+). It participates in amino-acid degradation; L-tryptophan degradation via kynurenine pathway; L-kynurenine from L-tryptophan: step 2/2. In terms of biological role, catalyzes the hydrolysis of N-formyl-L-kynurenine to L-kynurenine, the second step in the kynurenine pathway of tryptophan degradation. The chain is Kynurenine formamidase from Burkholderia lata (strain ATCC 17760 / DSM 23089 / LMG 22485 / NCIMB 9086 / R18194 / 383).